Consider the following 313-residue polypeptide: Glyoxylate/hydroxypyruvate reductase A (313 aa).

R228 is a catalytic residue. H276 functions as the Proton donor in the catalytic mechanism.

The protein belongs to the D-isomer specific 2-hydroxyacid dehydrogenase family. GhrA subfamily.

Its subcellular location is the cytoplasm. The enzyme catalyses glycolate + NADP(+) = glyoxylate + NADPH + H(+). The catalysed reaction is (R)-glycerate + NAD(+) = 3-hydroxypyruvate + NADH + H(+). It catalyses the reaction (R)-glycerate + NADP(+) = 3-hydroxypyruvate + NADPH + H(+). Its function is as follows. Catalyzes the NADPH-dependent reduction of glyoxylate and hydroxypyruvate into glycolate and glycerate, respectively. In Serratia proteamaculans (strain 568), this protein is Glyoxylate/hydroxypyruvate reductase A.